A 199-amino-acid polypeptide reads, in one-letter code: NADH-quinone oxidoreductase subunit I (199 aa).

2 4Fe-4S ferredoxin-type domains span residues 45–75 (LNRH…VEGA) and 91–120 (RVYQ…MSNE). [4Fe-4S] cluster-binding residues include cysteine 55, cysteine 58, cysteine 61, cysteine 65, cysteine 100, cysteine 103, cysteine 106, and cysteine 110. The disordered stretch occupies residues 164-199 (GTPAAHMLSGEDDAASETTLDRSDDHSATYEEAERP). The segment covering 182-199 (TLDRSDDHSATYEEAERP) has biased composition (basic and acidic residues).

The protein belongs to the complex I 23 kDa subunit family. NDH-1 is composed of 14 different subunits. Subunits NuoA, H, J, K, L, M, N constitute the membrane sector of the complex. [4Fe-4S] cluster is required as a cofactor.

The protein resides in the cell membrane. The enzyme catalyses a quinone + NADH + 5 H(+)(in) = a quinol + NAD(+) + 4 H(+)(out). In terms of biological role, NDH-1 shuttles electrons from NADH, via FMN and iron-sulfur (Fe-S) centers, to quinones in the respiratory chain. The immediate electron acceptor for the enzyme in this species is believed to be ubiquinone. Couples the redox reaction to proton translocation (for every two electrons transferred, four hydrogen ions are translocated across the cytoplasmic membrane), and thus conserves the redox energy in a proton gradient. The polypeptide is NADH-quinone oxidoreductase subunit I (Acidothermus cellulolyticus (strain ATCC 43068 / DSM 8971 / 11B)).